We begin with the raw amino-acid sequence, 1101 residues long: Carbamoyl phosphate synthase large chain (1101 aa).

Positions 1–402 (MPKRTDLKSV…ALQKALRSLE (402 aa)) are carboxyphosphate synthetic domain. ATP is bound by residues Arg-129, Arg-169, Gly-175, Gly-176, Glu-208, Ile-210, Glu-215, Gly-241, Val-242, His-243, Gln-285, and Glu-299. An ATP-grasp 1 domain is found at 133 to 328 (KGVVERAGGE…IAKIATKLAL (196 aa)). Positions 285, 299, and 301 each coordinate Mg(2+). Mn(2+) contacts are provided by Gln-285, Glu-299, and Asn-301. The oligomerization domain stretch occupies residues 403 to 544 (QKGSELAFPQ…YRYSSYDLET (142 aa)). The segment at 545–947 (EVAPHEGESV…AFAKSQSAAG (403 aa)) is carbamoyl phosphate synthetic domain. Residues 675–866 (ALVLERAGLV…LAKAAARIGV (192 aa)) form the ATP-grasp 2 domain. Positions 711, 750, 752, 757, 782, 783, 784, 785, 825, and 837 each coordinate ATP. Mg(2+) contacts are provided by Gln-825, Glu-837, and Asn-839. Positions 825, 837, and 839 each coordinate Mn(2+). An MGS-like domain is found at 948-1093 (GPLPTSGRVF…QEHDARLQQA (146 aa)). Residues 948 to 1101 (GPLPTSGRVF…QAVAGPEAAA (154 aa)) form an allosteric domain region.

It belongs to the CarB family. In terms of assembly, composed of two chains; the small (or glutamine) chain promotes the hydrolysis of glutamine to ammonia, which is used by the large (or ammonia) chain to synthesize carbamoyl phosphate. Tetramer of heterodimers (alpha,beta)4. Requires Mg(2+) as cofactor. The cofactor is Mn(2+).

It catalyses the reaction hydrogencarbonate + L-glutamine + 2 ATP + H2O = carbamoyl phosphate + L-glutamate + 2 ADP + phosphate + 2 H(+). The catalysed reaction is hydrogencarbonate + NH4(+) + 2 ATP = carbamoyl phosphate + 2 ADP + phosphate + 2 H(+). The protein operates within amino-acid biosynthesis; L-arginine biosynthesis; carbamoyl phosphate from bicarbonate: step 1/1. It functions in the pathway pyrimidine metabolism; UMP biosynthesis via de novo pathway; (S)-dihydroorotate from bicarbonate: step 1/3. Its function is as follows. Large subunit of the glutamine-dependent carbamoyl phosphate synthetase (CPSase). CPSase catalyzes the formation of carbamoyl phosphate from the ammonia moiety of glutamine, carbonate, and phosphate donated by ATP, constituting the first step of 2 biosynthetic pathways, one leading to arginine and/or urea and the other to pyrimidine nucleotides. The large subunit (synthetase) binds the substrates ammonia (free or transferred from glutamine from the small subunit), hydrogencarbonate and ATP and carries out an ATP-coupled ligase reaction, activating hydrogencarbonate by forming carboxy phosphate which reacts with ammonia to form carbamoyl phosphate. In Micrococcus luteus (strain ATCC 4698 / DSM 20030 / JCM 1464 / CCM 169 / CCUG 5858 / IAM 1056 / NBRC 3333 / NCIMB 9278 / NCTC 2665 / VKM Ac-2230) (Micrococcus lysodeikticus), this protein is Carbamoyl phosphate synthase large chain.